The primary structure comprises 250 residues: DNA repair protein RecO (250 aa).

This sequence belongs to the RecO family.

Functionally, involved in DNA repair and RecF pathway recombination. In Beijerinckia indica subsp. indica (strain ATCC 9039 / DSM 1715 / NCIMB 8712), this protein is DNA repair protein RecO.